A 312-amino-acid polypeptide reads, in one-letter code: tRNA dimethylallyltransferase (312 aa).

Residue 14 to 21 (GPTASGKS) participates in ATP binding. 16–21 (TASGKS) lines the substrate pocket. Interaction with substrate tRNA stretches follow at residues 39 to 42 (DSSL) and 163 to 167 (QRLQR).

The protein belongs to the IPP transferase family. Monomer. Mg(2+) serves as cofactor.

The enzyme catalyses adenosine(37) in tRNA + dimethylallyl diphosphate = N(6)-dimethylallyladenosine(37) in tRNA + diphosphate. Functionally, catalyzes the transfer of a dimethylallyl group onto the adenine at position 37 in tRNAs that read codons beginning with uridine, leading to the formation of N6-(dimethylallyl)adenosine (i(6)A). The sequence is that of tRNA dimethylallyltransferase from Methylococcus capsulatus (strain ATCC 33009 / NCIMB 11132 / Bath).